A 65-amino-acid polypeptide reads, in one-letter code: Small vasohibin-binding protein (65 aa).

The span at 1–22 (MEPACRKDKQKQQTPTRGDRTK) shows a compositional bias: basic and acidic residues. Residues 1 to 30 (MEPACRKDKQKQQTPTRGDRTKQKTAQQEL) are disordered. The stretch at 31–51 (KQRQRAEIYALNKVMTELEQQ) forms a coiled coil.

It belongs to the SVBP family.

It is found in the cytoplasm. The protein localises to the secreted. The protein resides in the cytoskeleton. In terms of biological role, enhances the tyrosine carboxypeptidase activity of vash1 and vash2, thereby promoting the removal of the C-terminal tyrosine residue of alpha-tubulin. Also required to enhance the solubility and secretion of vash1 and vash2. May play a role in axon and excitatory synapse formation. This chain is Small vasohibin-binding protein, found in Danio rerio (Zebrafish).